Reading from the N-terminus, the 448-residue chain is Argininosuccinate synthase (448 aa).

Residues 17-25 (AFSGGLDTS) and A43 each bind ATP. Y99 is an L-citrulline binding site. G129 and T131 together coordinate ATP. L-aspartate-binding residues include T131, N135, and D136. Residue N135 coordinates L-citrulline. D136 serves as a coordination point for ATP. Residues R139 and S192 each coordinate L-citrulline. Residue D194 coordinates ATP. L-citrulline is bound by residues T201, E203, and E280.

This sequence belongs to the argininosuccinate synthase family. Type 2 subfamily. In terms of assembly, homotetramer.

The protein resides in the cytoplasm. The enzyme catalyses L-citrulline + L-aspartate + ATP = 2-(N(omega)-L-arginino)succinate + AMP + diphosphate + H(+). It functions in the pathway amino-acid biosynthesis; L-arginine biosynthesis; L-arginine from L-ornithine and carbamoyl phosphate: step 2/3. This Bradyrhizobium sp. (strain ORS 278) protein is Argininosuccinate synthase.